A 1149-amino-acid polypeptide reads, in one-letter code: Beta-alanine-activating enzyme (1149 aa).

ATP is bound by residues 178 to 186 (TSGTTGLPK), Asp408, Arg422, and Lys543. Positions 570 to 646 (ASVRLKLQNL…DLLSHIMTET (77 aa)) constitute a Carrier domain. The residue at position 605 (Ser605) is an O-(pantetheine 4'-phosphoryl)serine. Positions 653–683 (PSKKRTADYSDSEASGKRQHKEMTTSSDTES) are disordered.

It belongs to the ATP-dependent AMP-binding enzyme family.

Its function is as follows. Covalently binds beta-alanine in an ATP-dependent manner to form a thioester bond with its phosphopantetheine group and transfers it to an, as yet, unknown acceptor. May be required for a post-translational protein modification or for post-transcriptional modification of an RNA. The polypeptide is Beta-alanine-activating enzyme (aasdh) (Danio rerio (Zebrafish)).